The primary structure comprises 463 residues: NADH dehydrogenase [ubiquinone] iron-sulfur protein 2, mitochondrial (463 aa).

Residues 1 to 33 constitute a mitochondrion transit peptide; that stretch reads MAALRALGGLRGVAAQVLRPGAGVRLPIQPSRG. The residue at position 62 (Lys-62) is an N6-acetyllysine. A Symmetric dimethylarginine modification is found at Arg-118. [4Fe-4S] cluster-binding residues include Cys-326, Cys-332, and Cys-347.

It belongs to the complex I 49 kDa subunit family. Core subunit of respiratory chain NADH dehydrogenase (Complex I) which is composed of 45 different subunits. Component of the iron-sulfur (IP) fragment of the enzyme. Interacts with NDUFAF3. Interacts with NDUFAF7. Interacts with CERS2. Requires [4Fe-4S] cluster as cofactor. Post-translationally, dimethylation at Arg-118 by NDUFAF7 takes place after NDUFS2 assembles into the complex I, leading to stabilize the early intermediate complex.

It localises to the mitochondrion inner membrane. It carries out the reaction a ubiquinone + NADH + 5 H(+)(in) = a ubiquinol + NAD(+) + 4 H(+)(out). Core subunit of the mitochondrial membrane respiratory chain NADH dehydrogenase (Complex I) which catalyzes electron transfer from NADH through the respiratory chain, using ubiquinone as an electron acceptor. Essential for the catalytic activity and assembly of complex I. Redox-sensitive, critical component of the oxygen-sensing pathway in the pulmonary vasculature which plays a key role in acute pulmonary oxygen-sensing and hypoxic pulmonary vasoconstriction. Plays an important role in carotid body sensing of hypoxia. Essential for glia-like neural stem and progenitor cell proliferation, differentiation and subsequent oligodendrocyte or neuronal maturation. The chain is NADH dehydrogenase [ubiquinone] iron-sulfur protein 2, mitochondrial (NDUFS2) from Pongo pygmaeus (Bornean orangutan).